The following is a 189-amino-acid chain: 3-hydroxyanthranilate 3,4-dioxygenase (189 aa).

Arg49 contributes to the O2 binding site. The Fe cation site is built by His53, Glu59, and His97. Glu59 is a substrate binding site. Positions 101 and 112 each coordinate substrate. Fe cation-binding residues include Cys127, Cys130, Cys165, and Cys168.

Belongs to the 3-HAO family. In terms of assembly, homodimer. Requires Fe(2+) as cofactor.

It carries out the reaction 3-hydroxyanthranilate + O2 = (2Z,4Z)-2-amino-3-carboxymuconate 6-semialdehyde. Its pathway is cofactor biosynthesis; NAD(+) biosynthesis; quinolinate from L-kynurenine: step 3/3. Functionally, catalyzes the oxidative ring opening of 3-hydroxyanthranilate to 2-amino-3-carboxymuconate semialdehyde, which spontaneously cyclizes to quinolinate. The chain is 3-hydroxyanthranilate 3,4-dioxygenase from Cupriavidus pinatubonensis (strain JMP 134 / LMG 1197) (Cupriavidus necator (strain JMP 134)).